The sequence spans 233 residues: UPF0173 metal-dependent hydrolase Igni_1254 (233 aa).

This sequence belongs to the UPF0173 family.

This Ignicoccus hospitalis (strain KIN4/I / DSM 18386 / JCM 14125) protein is UPF0173 metal-dependent hydrolase Igni_1254.